Reading from the N-terminus, the 236-residue chain is uncharacterized protein (236 aa).

Positions 22, 49, and 82 each coordinate NADP(+). Catalysis depends on proton donor residues Ser100 and Tyr114. 2 residues coordinate NADP(+): Tyr114 and Lys118. Lys118 acts as the Lowers pKa of active site Tyr in catalysis.

It belongs to the short-chain dehydrogenases/reductases (SDR) family.

The protein localises to the cytoplasm. It is found in the nucleus. This is an uncharacterized protein from Schizosaccharomyces pombe (strain 972 / ATCC 24843) (Fission yeast).